We begin with the raw amino-acid sequence, 672 residues long: Spermatid perinuclear RNA-binding protein (672 aa).

The region spanning 5–362 is the DZF domain; that stretch reads RSFANDDRHV…ALKRPFEDGV (358 aa). A disordered region spans residues 348–370; that stretch reads GTGSSALKRPFEDGVGDDKDPNK. A compositionally biased stretch (basic and acidic residues) spans 356–370; it reads RPFEDGVGDDKDPNK. The region spanning 386 to 452 is the DRBM 1 domain; sequence DLMNALMRLN…AVKVLQAMGY (67 aa). Residues 463–494 are disordered; it reads VSSDEKSDNEGKNETVSSISSNNTGNSTADTS. Basic and acidic residues predominate over residues 465 to 475; sequence SDEKSDNEGKN. Residues 477–490 show a composition bias toward low complexity; it reads TVSSISSNNTGNST. The region spanning 509-575 is the DRBM 2 domain; that stretch reads SGKNPVMELN…ALAALEKLFS (67 aa).

The protein localises to the cytoplasm. Its function is as follows. May be involved in normal spermatogenesis and sperm function. Binds to double-stranded DNA and RNA. The chain is Spermatid perinuclear RNA-binding protein (STRBP) from Gallus gallus (Chicken).